The sequence spans 220 residues: ATP-dependent Clp protease proteolytic subunit (220 aa).

S125 serves as the catalytic Nucleophile. H150 is an active-site residue.

The protein belongs to the peptidase S14 family. As to quaternary structure, fourteen ClpP subunits assemble into 2 heptameric rings which stack back to back to give a disk-like structure with a central cavity, resembling the structure of eukaryotic proteasomes.

It is found in the cytoplasm. The enzyme catalyses Hydrolysis of proteins to small peptides in the presence of ATP and magnesium. alpha-casein is the usual test substrate. In the absence of ATP, only oligopeptides shorter than five residues are hydrolyzed (such as succinyl-Leu-Tyr-|-NHMec, and Leu-Tyr-Leu-|-Tyr-Trp, in which cleavage of the -Tyr-|-Leu- and -Tyr-|-Trp bonds also occurs).. In terms of biological role, cleaves peptides in various proteins in a process that requires ATP hydrolysis. Has a chymotrypsin-like activity. Plays a major role in the degradation of misfolded proteins. This is ATP-dependent Clp protease proteolytic subunit from Bacteroides thetaiotaomicron (strain ATCC 29148 / DSM 2079 / JCM 5827 / CCUG 10774 / NCTC 10582 / VPI-5482 / E50).